The primary structure comprises 282 residues: ATP phosphoribosyltransferase (282 aa).

It belongs to the ATP phosphoribosyltransferase family. Long subfamily. The cofactor is Mg(2+).

The protein resides in the cytoplasm. The enzyme catalyses 1-(5-phospho-beta-D-ribosyl)-ATP + diphosphate = 5-phospho-alpha-D-ribose 1-diphosphate + ATP. The protein operates within amino-acid biosynthesis; L-histidine biosynthesis; L-histidine from 5-phospho-alpha-D-ribose 1-diphosphate: step 1/9. Its activity is regulated as follows. Feedback inhibited by histidine. Its function is as follows. Catalyzes the condensation of ATP and 5-phosphoribose 1-diphosphate to form N'-(5'-phosphoribosyl)-ATP (PR-ATP). Has a crucial role in the pathway because the rate of histidine biosynthesis seems to be controlled primarily by regulation of HisG enzymatic activity. The protein is ATP phosphoribosyltransferase of Saccharopolyspora erythraea (strain ATCC 11635 / DSM 40517 / JCM 4748 / NBRC 13426 / NCIMB 8594 / NRRL 2338).